Here is a 2291-residue protein sequence, read N- to C-terminus: Spectrin beta chain (2291 aa).

The actin-binding stretch occupies residues 1-271 (MTTDISIVRW…IITYVVTYYH (271 aa)). Calponin-homology (CH) domains follow at residues 50–154 (SVQK…LRFQ) and 169–274 (KSAK…HYFS). 17 Spectrin repeats span residues 300–408 (VHDY…ALRE), 420–521 (AARF…MRLE), 525–633 (QLQQ…RLEE), 636–739 (KLWQ…RLEN), 743–843 (YFQL…QRLL), 848–948 (LYKL…MDDL), 954–1057 (VQTF…KLEE), 1060–1166 (DLHR…VLLS), 1170–1272 (DQQL…EKLK), 1276–1376 (KLHE…GAML), 1386–1484 (QQTC…KALE), 1488–1591 (EAFQ…HLLE), 1594–1697 (KVQQ…RLNE), 1701–1802 (LFML…TQML), 1807–1909 (ELHK…QKLA), 1913–2015 (DLFR…ENLQ), and 2020–2089 (VYQF…KEMK). Basic and acidic residues predominate over residues 2097–2140 (EAERQRIKEEQEAKAASEAAEQAKREAERRDDVDVGASHDDSER). The tract at residues 2097–2152 (EAERQRIKEEQEAKAASEAAEQAKREAERRDDVDVGASHDDSERGGTPGAGEGHEG) is disordered. The region spanning 2147–2259 (GEGHEGYVTR…WVTSLKAQSD (113 aa)) is the PH domain. Serine 2195 is subject to Phosphoserine. Residues 2262–2275 (AVAASRSQTLPATS) are compositionally biased toward polar residues. Residues 2262–2291 (AVAASRSQTLPATSQKDEPKRRSFFTLKKK) are disordered.

It belongs to the spectrin family. Native spectrin molecule is a tetramer composed of two antiparallel heterodimers joined head to head so that each end of the native molecule includes the C-terminus of the alpha subunit and the N-terminus of the beta subunit.

The protein resides in the cytoplasm. Its subcellular location is the cytoskeleton. It localises to the cell cortex. Its function is as follows. Spectrin is the major constituent of the cytoskeletal network underlying the erythrocyte plasma membrane. It associates with band 4.1 and actin to form the cytoskeletal superstructure of the erythrocyte plasma membrane. Interacts with calmodulin in a calcium-dependent manner. The protein is Spectrin beta chain (beta-Spec) of Drosophila melanogaster (Fruit fly).